Here is a 190-residue protein sequence, read N- to C-terminus: Guanylate kinase (190 aa).

The 180-residue stretch at 7–186 (GKLIVFSAPS…AVDDVEAAIV (180 aa)) folds into the Guanylate kinase-like domain. 14–21 (APSGAGKT) is an ATP binding site.

Belongs to the guanylate kinase family.

It is found in the cytoplasm. The catalysed reaction is GMP + ATP = GDP + ADP. Functionally, essential for recycling GMP and indirectly, cGMP. The sequence is that of Guanylate kinase from Chlorobium chlorochromatii (strain CaD3).